The sequence spans 517 residues: Xaa-Pro dipeptidase (517 aa).

Mn(2+)-binding residues include aspartate 244, aspartate 255, histidine 336, glutamate 381, and glutamate 420.

Belongs to the peptidase M24B family. Bacterial-type prolidase subfamily. Monomer. It depends on Mn(2+) as a cofactor.

It catalyses the reaction Xaa-L-Pro dipeptide + H2O = an L-alpha-amino acid + L-proline. The enzyme catalyses diisopropyl fluorophosphate + H2O = diisopropyl phosphate + fluoride + 2 H(+). It carries out the reaction An aryl dialkyl phosphate + H2O = dialkyl phosphate + an aryl alcohol.. In terms of biological role, splits dipeptides with a prolyl or hydroxyprolyl residue in the C-terminal position and a nonpolar amino acid at the N-terminal position. Also catalyzes the hydrolysis of toxic organophosphorus cholinesterase-inhibiting compounds including insecticide paraoxon and nerve gases such as diisopropylfluorophosphate (DFP), O-isopropyl methylphosphonofluoridate (sarin), O-pinacolyl methylphosphonofluoridate (soman), and O-cyclohexyl methylphosphonofluoridate. This is Xaa-Pro dipeptidase (pepQ) from Alteromonas sp.